Reading from the N-terminus, the 406-residue chain is Succinylornithine transaminase (406 aa).

The residue at position 252 (lysine 252) is an N6-(pyridoxal phosphate)lysine.

Belongs to the class-III pyridoxal-phosphate-dependent aminotransferase family. AstC subfamily. Requires pyridoxal 5'-phosphate as cofactor.

It carries out the reaction N(2)-succinyl-L-ornithine + 2-oxoglutarate = N-succinyl-L-glutamate 5-semialdehyde + L-glutamate. It functions in the pathway amino-acid degradation; L-arginine degradation via AST pathway; L-glutamate and succinate from L-arginine: step 3/5. In terms of biological role, catalyzes the transamination of N(2)-succinylornithine and alpha-ketoglutarate into N(2)-succinylglutamate semialdehyde and glutamate. Can also act as an acetylornithine aminotransferase. The polypeptide is Succinylornithine transaminase (Citrobacter koseri (strain ATCC BAA-895 / CDC 4225-83 / SGSC4696)).